We begin with the raw amino-acid sequence, 126 residues long: Holo-[acyl-carrier-protein] synthase (126 aa).

Residues Asp9 and Glu58 each coordinate Mg(2+).

It belongs to the P-Pant transferase superfamily. AcpS family. Mg(2+) is required as a cofactor.

It is found in the cytoplasm. The enzyme catalyses apo-[ACP] + CoA = holo-[ACP] + adenosine 3',5'-bisphosphate + H(+). In terms of biological role, transfers the 4'-phosphopantetheine moiety from coenzyme A to a Ser of acyl-carrier-protein. The chain is Holo-[acyl-carrier-protein] synthase from Aliivibrio fischeri (strain MJ11) (Vibrio fischeri).